A 300-amino-acid chain; its full sequence is tRNA-cytidine(32) 2-sulfurtransferase (300 aa).

The PP-loop motif motif lies at 41 to 46; the sequence is SGGKDS. Residues Cys-116, Cys-119, and Cys-207 each contribute to the [4Fe-4S] cluster site.

Belongs to the TtcA family. In terms of assembly, homodimer. Requires Mg(2+) as cofactor. It depends on [4Fe-4S] cluster as a cofactor.

It is found in the cytoplasm. It carries out the reaction cytidine(32) in tRNA + S-sulfanyl-L-cysteinyl-[cysteine desulfurase] + AH2 + ATP = 2-thiocytidine(32) in tRNA + L-cysteinyl-[cysteine desulfurase] + A + AMP + diphosphate + H(+). Its pathway is tRNA modification. Functionally, catalyzes the ATP-dependent 2-thiolation of cytidine in position 32 of tRNA, to form 2-thiocytidine (s(2)C32). The sulfur atoms are provided by the cysteine/cysteine desulfurase (IscS) system. This is tRNA-cytidine(32) 2-sulfurtransferase from Idiomarina loihiensis (strain ATCC BAA-735 / DSM 15497 / L2-TR).